A 170-amino-acid polypeptide reads, in one-letter code: Thialysine N-epsilon-acetyltransferase (170 aa).

Residues 4–166 (VMIREAKEGD…FRFEGEAMRE (163 aa)) enclose the N-acetyltransferase domain. Residue 27–28 (YE) participates in substrate binding. Lys29 is modified (N6-acetyllysine). Glu92 contacts substrate. Residues 94-96 (IYV), 102-107 (GQGIGS), 133-135 (NKR), and Tyr140 each bind acetyl-CoA. Catalysis depends on Tyr140, which acts as the Proton donor. Glu152 serves as a coordination point for substrate.

It belongs to the acetyltransferase family. In terms of assembly, homodimer.

It localises to the cytoplasm. The enzyme catalyses S-(2-aminoethyl)-L-cysteine + acetyl-CoA = S-(2-acetamidoethyl)-L-cysteine + CoA + H(+). It carries out the reaction an alkane-alpha,omega-diamine + acetyl-CoA = an N-acetylalkane-alpha,omega-diamine + CoA + H(+). Functionally, catalyzes the N-acetylation of the amino acid thialysine (S-(2-aminoethyl)-L-cysteine), a L-lysine analog with the 4-methylene group substituted with a sulfur. May also catalyze acetylation of polyamines, such as norspermidine, spermidine or spermine. However, ability to acetylate polyamines is weak, suggesting that it does not act as a diamine acetyltransferase in vivo. The protein is Thialysine N-epsilon-acetyltransferase of Bos taurus (Bovine).